The following is a 292-amino-acid chain: 2-(5''-triphosphoribosyl)-3'-dephosphocoenzyme-A synthase (292 aa).

Belongs to the CitG/MdcB family.

The enzyme catalyses 3'-dephospho-CoA + ATP = 2'-(5''-triphospho-alpha-D-ribosyl)-3'-dephospho-CoA + adenine. Catalyzes the formation of 2-(5''-triphosphoribosyl)-3'-dephosphocoenzyme-A, the precursor of the prosthetic group of the holo-acyl carrier protein (gamma chain) of citrate lyase, from ATP and dephospho-CoA. The protein is 2-(5''-triphosphoribosyl)-3'-dephosphocoenzyme-A synthase of Escherichia coli O17:K52:H18 (strain UMN026 / ExPEC).